We begin with the raw amino-acid sequence, 129 residues long: Small ribosomal subunit protein uS12 (129 aa).

The protein belongs to the universal ribosomal protein uS12 family. Part of the 30S ribosomal subunit. Contacts proteins S8 and S17. May interact with IF1 in the 30S initiation complex.

In terms of biological role, with S4 and S5 plays an important role in translational accuracy. Its function is as follows. Interacts with and stabilizes bases of the 16S rRNA that are involved in tRNA selection in the A site and with the mRNA backbone. Located at the interface of the 30S and 50S subunits, it traverses the body of the 30S subunit contacting proteins on the other side and probably holding the rRNA structure together. The combined cluster of proteins S8, S12 and S17 appears to hold together the shoulder and platform of the 30S subunit. This is Small ribosomal subunit protein uS12 from Rickettsia typhi (strain ATCC VR-144 / Wilmington).